Consider the following 320-residue polypeptide: tRNA dimethylallyltransferase (320 aa).

10–17 (GPTASGKT) is an ATP binding site. 12–17 (TASGKT) lines the substrate pocket. Interaction with substrate tRNA regions lie at residues 35–38 (DSAL), 159–163 (QRIQR), and 241–246 (RCVGYR).

It belongs to the IPP transferase family. In terms of assembly, monomer. Requires Mg(2+) as cofactor.

It catalyses the reaction adenosine(37) in tRNA + dimethylallyl diphosphate = N(6)-dimethylallyladenosine(37) in tRNA + diphosphate. Functionally, catalyzes the transfer of a dimethylallyl group onto the adenine at position 37 in tRNAs that read codons beginning with uridine, leading to the formation of N6-(dimethylallyl)adenosine (i(6)A). The chain is tRNA dimethylallyltransferase from Aromatoleum aromaticum (strain DSM 19018 / LMG 30748 / EbN1) (Azoarcus sp. (strain EbN1)).